The following is a 1451-amino-acid chain: ABC transporter G family member 32 (1451 aa).

The ABC transporter 1 domain maps to 162 to 435 (GNALHISPTR…FELMGFRCPQ (274 aa)). ATP is bound at residue 195–202 (GPPGSGKT). Residues 513–725 (ALLKANIDRE…AQNAISTNEF (213 aa)) enclose the ABC transmembrane type-2 1 domain. Transmembrane regions (helical) follow at residues 531–551 (FVYI…MTTF), 563–583 (GTIY…NGFA), 618–638 (IPVT…VVGF), 650–670 (LLLV…AGIG), 674–694 (VVSQ…GGFI), and 760–780 (IGFG…TVAL). The segment at 809–835 (ILDSCEEKKSRKKEQSQSVNQKHWNNT) is disordered. A compositionally biased stretch (basic and acidic residues) spans 813–823 (CEEKKSRKKEQ). An ABC transporter 2 domain is found at 853-1105 (LSFNDIKYSV…KLIEYFEGIE (253 aa)). 898–905 (GVSGAGKT) lines the ATP pocket. The ABC transmembrane type-2 2 domain maps to 1178 to 1392 (TQCIACLWKH…TLYGLVASQF (215 aa)). A run of 7 helical transmembrane segments spans residues 1197–1217 (YTAV…TMFW), 1237–1257 (YAAV…VVVV), 1285–1305 (LPYI…MIGF), 1312–1332 (FIWY…FGMM), 1342–1362 (IAAI…GYLI), 1373–1393 (WYCW…SQFG), and 1423–1443 (LVAV…SFAI).

Belongs to the ABC transporter superfamily. ABCG family. PDR (TC 3.A.1.205) subfamily.

It localises to the membrane. In terms of biological role, may be a general defense protein. The sequence is that of ABC transporter G family member 32 from Oryza sativa subsp. japonica (Rice).